The primary structure comprises 234 residues: Glucosamine-6-phosphate deaminase (234 aa).

Aspartate 62 functions as the Proton acceptor; for enolization step in the catalytic mechanism. Asparagine 128 acts as the For ring-opening step in catalysis. Histidine 130 serves as the catalytic Proton acceptor; for ring-opening step. The active-site For ring-opening step is glutamate 135.

Belongs to the glucosamine/galactosamine-6-phosphate isomerase family. NagB subfamily.

It carries out the reaction alpha-D-glucosamine 6-phosphate + H2O = beta-D-fructose 6-phosphate + NH4(+). It participates in amino-sugar metabolism; N-acetylneuraminate degradation; D-fructose 6-phosphate from N-acetylneuraminate: step 5/5. In terms of biological role, catalyzes the reversible isomerization-deamination of glucosamine 6-phosphate (GlcN6P) to form fructose 6-phosphate (Fru6P) and ammonium ion. The polypeptide is Glucosamine-6-phosphate deaminase (Streptococcus pyogenes serotype M3 (strain ATCC BAA-595 / MGAS315)).